The chain runs to 218 residues: Uracil-DNA glycosylase (218 aa).

Catalysis depends on Asp-68, which acts as the Proton acceptor.

Belongs to the uracil-DNA glycosylase (UDG) superfamily. UNG family. As to quaternary structure, homodimer. Interacts with protein OPG148. Component of the Uracil-DNA glycosylase(UDG)-OPG148-polymerase complex; OPG148 and UDG form a heterodimeric processivity factor that associates with OPG71 to form the processive polymerase holoenzyme.

The enzyme catalyses Hydrolyzes single-stranded DNA or mismatched double-stranded DNA and polynucleotides, releasing free uracil.. Plays an essential role in viral replication as a component of the DNA polymerase processivity factor. Excises uracil residues from the DNA which can arise as a result of misincorporation of dUMP residues by DNA polymerase or due to deamination of cytosine. This is Uracil-DNA glycosylase (OPG116) from Bos taurus (Bovine).